The chain runs to 131 residues: Small ribosomal subunit protein uS8 (131 aa).

This sequence belongs to the universal ribosomal protein uS8 family. Part of the 30S ribosomal subunit. Contacts proteins S5 and S12.

Functionally, one of the primary rRNA binding proteins, it binds directly to 16S rRNA central domain where it helps coordinate assembly of the platform of the 30S subunit. In Dictyoglomus turgidum (strain DSM 6724 / Z-1310), this protein is Small ribosomal subunit protein uS8.